The primary structure comprises 238 residues: Pyridoxine 5'-phosphate synthase (238 aa).

Residue N7 coordinates 3-amino-2-oxopropyl phosphate. Residue 9-10 (DH) participates in 1-deoxy-D-xylulose 5-phosphate binding. R18 contacts 3-amino-2-oxopropyl phosphate. The Proton acceptor role is filled by H43. Positions 45 and 50 each coordinate 1-deoxy-D-xylulose 5-phosphate. E70 serves as the catalytic Proton acceptor. T100 contacts 1-deoxy-D-xylulose 5-phosphate. The Proton donor role is filled by H190. 3-amino-2-oxopropyl phosphate is bound by residues G191 and 212 to 213 (GH).

Belongs to the PNP synthase family. Homooctamer; tetramer of dimers.

The protein localises to the cytoplasm. The enzyme catalyses 3-amino-2-oxopropyl phosphate + 1-deoxy-D-xylulose 5-phosphate = pyridoxine 5'-phosphate + phosphate + 2 H2O + H(+). Its pathway is cofactor biosynthesis; pyridoxine 5'-phosphate biosynthesis; pyridoxine 5'-phosphate from D-erythrose 4-phosphate: step 5/5. Its function is as follows. Catalyzes the complicated ring closure reaction between the two acyclic compounds 1-deoxy-D-xylulose-5-phosphate (DXP) and 3-amino-2-oxopropyl phosphate (1-amino-acetone-3-phosphate or AAP) to form pyridoxine 5'-phosphate (PNP) and inorganic phosphate. The protein is Pyridoxine 5'-phosphate synthase of Prochlorococcus marinus subsp. pastoris (strain CCMP1986 / NIES-2087 / MED4).